The primary structure comprises 395 residues: MTDKQLDTKLVNAGRSKKYTLGSVNSVIQRASSLVFDTVEAKKHATRNLANGELFYGRRGTLTHFSLQEAMCELEGGAGCALFPCGAAAVANTILAFVEQGDHILMTNTAYEPSQDFCSKILGKLGVTTSWFDPLIGADITQHIQPNTKVVFLESPGSITMEVHDIPSIVSAVRRVAPEAVIMIDNTWAAGVLFKALEFDIDISIQAGTKYLIGHSDAMVGTAVANARCWEQLRENAYLMGQMLDADTAYMTSRGLRTLGVRLRQHQESSLKIAAWLANHPQVARVNHPALPGSKGHAFWKRDFTGSSGLFSFVLNKKLTEAELSAYLDNFSLFSMAYSWGGYESLIIANQPEQIAAIRPAGGVDFTGTLVRVHIGLESVDDLIADLAAGFARIV.

Position 210 is an N6-(pyridoxal phosphate)lysine (K210).

This sequence belongs to the trans-sulfuration enzymes family. In terms of assembly, homotetramer. Pyridoxal 5'-phosphate serves as cofactor.

It is found in the cytoplasm. The catalysed reaction is L,L-cystathionine + H2O = L-homocysteine + pyruvate + NH4(+). It carries out the reaction an S-substituted L-cysteine + H2O = a thiol + pyruvate + NH4(+). The protein operates within amino-acid biosynthesis; L-methionine biosynthesis via de novo pathway; L-homocysteine from L-cystathionine: step 1/1. Catalyzes the cleavage of cystathionine to homocysteine, pyruvate and ammonia during methionine biosynthesis. The protein is Cystathionine beta-lyase (metC) of Salmonella typhimurium (strain LT2 / SGSC1412 / ATCC 700720).